The primary structure comprises 551 residues: MPLSTAGILSSSSAASNRSRNKARYRTKAVSSEVDESLFGDIKSPAQGQSDSPIVLLRDKHTLQKTLTALGLDRKPETIQLITRDMVRELIVPTEDPSGESLIISPEEFERIKWASHVLTREELEARDQAFKKEKEATMDAVMTRKKIMKQKEMVWNNNKKLSDLEEVAKERAQNLLQRANKLRMEQEEELKDMSKIILNAKCHAIRDAQILEKQQIQKELDTEEKRLDQMMEVERQKSIQRQEELERKRREERIRGRRQIVEQMEKNQEERSLLAEQREQEKEQMLEYMEQLQEEDLKDMERRQQQKLKMQAEIKRINDENQKQKAELLAQEKLADQMVMEFTKKKMAREAEFEAEQERIRREKEKEIARLRAMQEKAQDYQAEQDALRAKRNQEVADREWRRKEKENARKKMETEAELRKSRLEQVAFKEHALAVQVQRDRDEFERILRAQREQIEKERLEEEKKATGRLQHANELRRQVRENQQKEVQNRIATFEEGRRLKEEAQKRRERIDEIKRKKLEELRATGLPEKYCIEAERKANILPATSVN.

Disordered regions lie at residues Met1–Val30 and Arg461–Glu489. Positions Asn157–Arg526 form a coiled coil.

It belongs to the CFAP45 family. Microtubule inner protein component of sperm flagellar doublet microtubules. Interacts with AK8; dimerization with AK8 may create a cavity at the interface of the dimer that can accommodate AMP. Interacts with CFAP52. Interacts with ENKUR. Directly interacts with DNALI1. Interacts with DNAH11. Interacts with DNAI1. In terms of tissue distribution, expressed in respiratory cells and in sperm (at protein level). Expressed in nasopharyngeal epithelium and trachea.

The protein localises to the cytoplasm. It localises to the cytoskeleton. It is found in the cilium axoneme. The protein resides in the flagellum axoneme. Its subcellular location is the cell projection. The protein localises to the cilium. It localises to the flagellum. Its function is as follows. Microtubule inner protein (MIP) part of the dynein-decorated doublet microtubules (DMTs) in cilia axoneme, which is required for motile cilia beating. It is an AMP-binding protein that may facilitate dynein ATPase-dependent ciliary and flagellar beating via adenine nucleotide homeostasis. May function as a donor of AMP to AK8 and hence promote ADP production. The chain is Cilia- and flagella-associated protein 45 from Homo sapiens (Human).